The primary structure comprises 475 residues: MQVTETLNEGLKREIKIVVPAKDLEEKLNERLDDTKGKVRLNGFRPGKVPGGHLRKMYGKSFMAEILNEILNDAPRSILADRNERPAMQPKIDIDEDEKILDGKADFTFSLKYEVLPKIEIKAFEHIEVIREIAAIPEKDIDEQVNRVLSSTRNYSLKEGSSEEGDRVTIDYLGKLEGVPFEGGADNDAQLILGSKQFIPGFEEQLVGVKAGDAKTISVKFPDNYSAVHLAGREAEFDITVKAVFRPDELKIDDEAAKKVGLESLDRLREVVRGQIESQYGSMTRQKVKRQILDALDADYNFEIPEGLLEIEFNNIWAQVNDDLKKAGRSFEDEGVTEEKAREEYHVLAQRRVRLGLVLSEIGMKVGVKVNEDELKAAVFEQVRQYPGQEKEIMDFFRKTPEAVENLRAPIFEEKVIDYLLAQIKVTDKEVTIEELMKEYDETDVPEEKPAKKKSAVKEKSAEKTSAKKKAPKKA.

Residues 165–250 enclose the PPIase FKBP-type domain; that stretch reads GDRVTIDYLG…VKAVFRPDEL (86 aa). Residues 439–466 show a composition bias toward basic and acidic residues; sequence EYDETDVPEEKPAKKKSAVKEKSAEKTS. The interval 439–475 is disordered; sequence EYDETDVPEEKPAKKKSAVKEKSAEKTSAKKKAPKKA.

The protein belongs to the FKBP-type PPIase family. Tig subfamily.

The protein localises to the cytoplasm. The enzyme catalyses [protein]-peptidylproline (omega=180) = [protein]-peptidylproline (omega=0). Involved in protein export. Acts as a chaperone by maintaining the newly synthesized protein in an open conformation. Functions as a peptidyl-prolyl cis-trans isomerase. The protein is Trigger factor of Bartonella tribocorum (strain CIP 105476 / IBS 506).